We begin with the raw amino-acid sequence, 1621 residues long: ABC transporter A family member 2 (1621 aa).

Transmembrane regions (helical) follow at residues 30 to 50, 234 to 254, 276 to 296, 309 to 329, 338 to 358, 365 to 385, and 405 to 425; these read ILFP…VMAF, SVFI…DLVI, ISWM…ISII, GVVI…AFIL, FCGL…IFVA, GAKL…IFAM, and NQVI…VWYL. Positions 484–717 constitute an ABC transporter 1 domain; it reads ISIRNLRKEY…FGCGYLLTCS (234 aa). 520-527 is an ATP binding site; it reads GPNGSGKS. The next 7 helical transmembrane spans lie at 856 to 876, 1033 to 1053, 1083 to 1103, 1111 to 1131, 1142 to 1162, 1183 to 1203, and 1227 to 1247; these read FFLT…MYKA, IVYF…SFAG, VWDY…LAGI, FGLM…LSYL, ATGA…IISL, VDIV…LFLV, and GSPM…IMIL. Residues 1293 to 1528 enclose the ABC transporter 2 domain; that stretch reads LQFRNLHKLF…FGAGYTFDVK (236 aa). ATP is bound at residue 1331–1338; it reads GLNGAGKT.

This sequence belongs to the ABC transporter superfamily. ABCA family.

Its subcellular location is the membrane. The polypeptide is ABC transporter A family member 2 (abcA2) (Dictyostelium discoideum (Social amoeba)).